Reading from the N-terminus, the 426-residue chain is Serine--tRNA ligase (426 aa).

233 to 235 (TAE) lines the L-serine pocket. An ATP-binding site is contributed by 264-266 (RAE). E287 serves as a coordination point for L-serine. 351 to 354 (EISS) contributes to the ATP binding site. S387 is a binding site for L-serine.

It belongs to the class-II aminoacyl-tRNA synthetase family. Type-1 seryl-tRNA synthetase subfamily. Homodimer. The tRNA molecule binds across the dimer.

It is found in the cytoplasm. The enzyme catalyses tRNA(Ser) + L-serine + ATP = L-seryl-tRNA(Ser) + AMP + diphosphate + H(+). It catalyses the reaction tRNA(Sec) + L-serine + ATP = L-seryl-tRNA(Sec) + AMP + diphosphate + H(+). It functions in the pathway aminoacyl-tRNA biosynthesis; selenocysteinyl-tRNA(Sec) biosynthesis; L-seryl-tRNA(Sec) from L-serine and tRNA(Sec): step 1/1. Functionally, catalyzes the attachment of serine to tRNA(Ser). Is also able to aminoacylate tRNA(Sec) with serine, to form the misacylated tRNA L-seryl-tRNA(Sec), which will be further converted into selenocysteinyl-tRNA(Sec). This Clostridium novyi (strain NT) protein is Serine--tRNA ligase.